Consider the following 200-residue polypeptide: ATP-dependent Clp protease proteolytic subunit (200 aa).

S98 (nucleophile) is an active-site residue. H123 is an active-site residue.

Belongs to the peptidase S14 family. In terms of assembly, fourteen ClpP subunits assemble into 2 heptameric rings which stack back to back to give a disk-like structure with a central cavity, resembling the structure of eukaryotic proteasomes.

It is found in the cytoplasm. The enzyme catalyses Hydrolysis of proteins to small peptides in the presence of ATP and magnesium. alpha-casein is the usual test substrate. In the absence of ATP, only oligopeptides shorter than five residues are hydrolyzed (such as succinyl-Leu-Tyr-|-NHMec, and Leu-Tyr-Leu-|-Tyr-Trp, in which cleavage of the -Tyr-|-Leu- and -Tyr-|-Trp bonds also occurs).. Functionally, cleaves peptides in various proteins in a process that requires ATP hydrolysis. Has a chymotrypsin-like activity. Plays a major role in the degradation of misfolded proteins. The polypeptide is ATP-dependent Clp protease proteolytic subunit (Deinococcus geothermalis (strain DSM 11300 / CIP 105573 / AG-3a)).